Consider the following 655-residue polypeptide: Macrolide export ATP-binding/permease protein MacB (655 aa).

The ABC transporter domain maps to 6–244 (IVLRGLRREY…VAAPTAAAAQ (239 aa)). 42 to 49 (GASGSGKS) lines the ATP pocket. Helical transmembrane passes span 279-299 (FLTM…VAVG), 528-548 (LTLM…IGVM), 579-599 (FLIE…AVAY), and 618-638 (AGSI…FGYL).

Belongs to the ABC transporter superfamily. Macrolide exporter (TC 3.A.1.122) family. As to quaternary structure, homodimer.

It is found in the cell inner membrane. Its function is as follows. Non-canonical ABC transporter that contains transmembrane domains (TMD), which form a pore in the inner membrane, and an ATP-binding domain (NBD), which is responsible for energy generation. Confers resistance against macrolides. This is Macrolide export ATP-binding/permease protein MacB from Rhodopseudomonas palustris (strain BisB18).